The chain runs to 179 residues: Translation initiation factor IF-3 (179 aa).

The protein belongs to the IF-3 family. In terms of assembly, monomer.

It localises to the cytoplasm. Functionally, IF-3 binds to the 30S ribosomal subunit and shifts the equilibrium between 70S ribosomes and their 50S and 30S subunits in favor of the free subunits, thus enhancing the availability of 30S subunits on which protein synthesis initiation begins. This Bradyrhizobium diazoefficiens (strain JCM 10833 / BCRC 13528 / IAM 13628 / NBRC 14792 / USDA 110) protein is Translation initiation factor IF-3.